The chain runs to 299 residues: MAEFPASLLILNGKSTDNLPLREAIMLLREEGMTIHVRVTWEKGDAARYVEEARKFGVATVIAGGGDGTINEVSTALIQCEGDDIPALGILPLGTANDFATSVGIPEALDKALKLAIAGDAIAIDMAQVNKQTCFINMATGGFGTRITTETPEKLKAALGSVSYIIHGLMRMDTLQPDRCEIRGENFHWQGDALVIGIGNGRQAGGGQQLCPNALINDGLLQLRIFTGDEILPALVSTLKSDEDNPNIIEGASSWFDIQAPHDITFNLDGEPLSGQNFHIEILPAALRCRLPPDCPLLR.

The region spanning 2–133 (AEFPASLLIL…IDMAQVNKQT (132 aa)) is the DAGKc domain. ATP-binding positions include T40, 66 to 72 (GDGTINE), and T95. 3 residues coordinate Mg(2+): L215, D218, and L220. E271 acts as the Proton acceptor in catalysis.

It belongs to the diacylglycerol/lipid kinase family. YegS lipid kinase subfamily. Mg(2+) serves as cofactor. Requires Ca(2+) as cofactor.

Its subcellular location is the cytoplasm. Its function is as follows. Probably phosphorylates lipids; the in vivo substrate is unknown. The polypeptide is Probable lipid kinase YegS (Escherichia coli (strain K12 / MC4100 / BW2952)).